The primary structure comprises 21 residues: Dahlein-5.4 (21 aa).

In terms of tissue distribution, expressed by the skin dorsal glands.

The protein resides in the secreted. Functionally, has no antimicrobial activity. Strongly inhibits the formation of NO by neuronal nitric oxide synthase at micromolar concentrations. The protein is Dahlein-5.4 of Ranoidea dahlii (Dahl's aquatic frog).